Reading from the N-terminus, the 187-residue chain is MNLQHHFLIAMPALQDPIFRRSVVYICEHNTNGAMGIIVNKPLENLKIEGILEKLKITPEPRDESIRLDKPVMLGGPLAEDRGFILHTPPSNFASSIRISDNTVMTTSRDVLETLGTDKQPSDVLVALGYASWEKGQLEQEILDNAWLTAPADLNILFKTPIADRWRDAAKLIGVDILTMPGVAGHA.

It belongs to the UPF0301 (AlgH) family.

The chain is UPF0301 protein YqgE from Escherichia coli O127:H6 (strain E2348/69 / EPEC).